We begin with the raw amino-acid sequence, 445 residues long: Arginine/agmatine antiporter (445 aa).

Topologically, residues 1–9 (MSSDADAHK) are cytoplasmic. A helical membrane pass occupies residues 10-30 (VGLIPVTLMVSGNIMGSGVFL). Residue Ile-23 participates in agmatine binding. L-arginine is bound by residues Ile-23 and Ser-26. Over 31 to 38 (LPANLAAT) the chain is Periplasmic. Residues 39-59 (GGIAIYGWLVTIIGALALSMV) form a helical membrane-spanning segment. The Cytoplasmic portion of the chain corresponds to 60-98 (YAKMSSLDPSPGGSYAYARRCFGPFLGYQTNVLYWLACW). Agmatine-binding residues include Ala-96, Cys-97, and Asn-101. Ala-96 lines the L-arginine pocket. A helical transmembrane segment spans residues 99-119 (IGNIAMVVIGVGYLSYFFPIL). Residues 120–122 (KDP) lie on the Periplasmic side of the membrane. Residues 123-143 (LVLTLTCVAVLWIFVLLNIVG) form a helical membrane-spanning segment. Topologically, residues 144 to 152 (PKMITRVQA) are cytoplasmic. The chain crosses the membrane as a helical span at residues 153–173 (VATVLALVPIVGIAVFGWFWF). At 174-196 (KGETYMAAWNVSGMNTFGAIQST) the chain is on the periplasmic side. A helical transmembrane segment spans residues 197–217 (LNVTLWSFIGVESASVAAGVV). The L-arginine site is built by Trp-202 and Ile-205. Ile-205 serves as a coordination point for agmatine. Residues 218-225 (KNPKRNVP) lie on the Cytoplasmic side of the membrane. The chain crosses the membrane as a helical span at residues 226 to 246 (IATIGGVLIAAVCYVLSTTAI). Topologically, residues 247–275 (MGMIPNAALRVSASPFGDAARMALGDTAG) are periplasmic. Residues 276-296 (AIVSFCAAAGCLGSLGGWTLL) form a helical membrane-spanning segment. Trp-293 contributes to the agmatine binding site. At 297–319 (AGQTAKAAADDGLFPPIFARVNK) the chain is on the cytoplasmic side. The chain crosses the membrane as a helical span at residues 320-340 (AGTPVAGLLIVGVLMTIFQFS). At 341–355 (SMSPNAAKEFGLVSS) the chain is on the periplasmic side. The helical transmembrane segment at 356 to 376 (VSVIFTLVPYLYTCAALLLLG) threads the bilayer. Position 357 (Ser-357) interacts with L-arginine. The Cytoplasmic portion of the chain corresponds to 377–385 (HGHFGKARP). A helical transmembrane segment spans residues 386 to 406 (LYLLITFVAFVYCIWAVIGSG). Over 407 to 408 (AK) the chain is Periplasmic. Residues 409–429 (EVMWSFVTLMVITALYALNYN) form a helical membrane-spanning segment. At 430–445 (RIHKNPYPLDAPVKQD) the chain is on the cytoplasmic side.

It belongs to the amino acid-polyamine-organocation (APC) superfamily. Basic amino acid/polyamine antiporter (APA) (TC 2.A.3.2) family. As to quaternary structure, homodimer; each subunit has its own individual transport capacity.

It localises to the cell inner membrane. It catalyses the reaction agmatine(in) + L-arginine(out) = agmatine(out) + L-arginine(in). Functionally, major component of the acid-resistance (AR) system allowing enteric pathogens to survive the acidic environment in the stomach. Exchanges extracellular arginine for its intracellular decarboxylation product agmatine (Agm) thereby expelling intracellular protons. Probably undergoes several conformational states in order to translocate the substrate across the membrane; keeps the substrate accessible to only 1 side of the membrane at a time by opening and closing 3 membrane-internal gates. This Salmonella typhi protein is Arginine/agmatine antiporter (adiC).